A 297-amino-acid polypeptide reads, in one-letter code: Thoeris protein ThsA (297 aa).

2 consecutive transmembrane segments (helical) span residues 32–52 (ALSI…FLDL) and 57–77 (RLII…VQFI).

The protein resides in the cell membrane. Activated by a signal molecule generated by ThsB. Functionally, probable membrane protein component of the Thoeris antiviral defense system, composed of ThsA and ThsB. Expression of ThsA and ThsB in B.subtilis (strain BEST7003) confers resistance to phages SBSphiC, SBSphiJ and SPO1. Activation by a signal generated by ThsB leads to phage resistance. This Bacillus amyloliquefaciens (strain Y2) (Bacillus amyloliquefaciens subsp. plantarum (strain B9601-Y2)) protein is Thoeris protein ThsA.